The primary structure comprises 294 residues: Keratin-like protein KRT222 (294 aa).

In terms of domain architecture, IF rod spans M1–Y150. A coiled-coil region spans residues M1–Y151.

The protein belongs to the intermediate filament family.

This chain is Keratin-like protein KRT222 (Krt222), found in Mus musculus (Mouse).